Reading from the N-terminus, the 120-residue chain is MAQLAKFDVPEELTNKALEALELARDTGKIKKGTNEATKAIERGNAKLVLIAEDIEPAEIVAHIGPLSEEKKAPYIFIKNQKELGAASGLGVSCATVAIVDAGKAAEMVQDIAQKLEALK.

This sequence belongs to the eukaryotic ribosomal protein eL8 family. In terms of assembly, part of the 50S ribosomal subunit. Probably part of the RNase P complex.

Its subcellular location is the cytoplasm. Functionally, multifunctional RNA-binding protein that recognizes the K-turn motif in ribosomal RNA, the RNA component of RNase P, box H/ACA, box C/D and box C'/D' sRNAs. This chain is Large ribosomal subunit protein eL8, found in Methanosarcina acetivorans (strain ATCC 35395 / DSM 2834 / JCM 12185 / C2A).